The chain runs to 166 residues: Large ribosomal subunit protein bL9 (166 aa).

It belongs to the bacterial ribosomal protein bL9 family.

Functionally, binds to the 23S rRNA. This is Large ribosomal subunit protein bL9 from Psychrobacter arcticus (strain DSM 17307 / VKM B-2377 / 273-4).